We begin with the raw amino-acid sequence, 2530 residues long: Agglutinin-like protein 2 (2530 aa).

The N-terminal stretch at 1 to 17 is a signal peptide; sequence MLLQFLLLSLCVSVATA. 4 disulfides stabilise this stretch: Cys-73–Cys-150, Cys-96–Cys-112, Cys-205–Cys-297, and Cys-227–Cys-256. Asn-253 and Asn-315 each carry an N-linked (GlcNAc...) asparagine glycan. ALS repeat units lie at residues 364–395, 400–431, 437–468, 473–504, 509–540, and 545–576; these read TTITTSYVGVTTSYSTKTAPIGETATVIVDVP, TTVTSEWTGTITTTTTRTNPTDSIDTVVVQVP, VTTTEYWSQSYATTTTVTAPPGGTDSVIIREP, VTTTEYWSQSYATSSTVTAPPGGTDTVIIREP, and VTTTEYWSQSFATTTTITAPPGETDTVLIREP. The N-linked (GlcNAc...) asparagine glycan is linked to Asn-578. The ALS 7 repeat unit spans residues 581–612; sequence VTTTEYWSQSYVTTSTITAPPGGTDTVIIREP. A glycan (N-linked (GlcNAc...) asparagine) is linked at Asn-614. ALS repeat units follow at residues 617–648, 653–684, 689–720, 725–756, 761–792, 797–828, and 833–864; these read VTTTEYWSQSYATTTTVTAPPGGTDTVIIREP, VTTTEYWSQSYATTTTVTGPPGGTDTVIIREP, and VTTTEYWSQSYATTTTVTAPPGGTATVIIREP. Asn-866 carries an N-linked (GlcNAc...) asparagine glycan. ALS repeat units lie at residues 869–900, 905–936, 941–972, and 977–1008; these read VTTTEYWSQSYATTTTVTGPPGGTDTVIIREP and VTTTEYWSQSYATTTTVTAPPGGTATVIIREP. Positions 954-967 are enriched in low complexity; the sequence is TTTVTGPPGGTDTV. The tract at residues 954-975 is disordered; sequence TTTVTGPPGGTDTVIIREPPNP. A glycan (N-linked (GlcNAc...) asparagine) is linked at Asn-1010. 4 ALS repeats span residues 1013-1044, 1049-1077, 1085-1116, and 1121-1152; these read VTTTEYWSQSYATTTTVTGPPGGTDTVIIREP, VTTTEYWSQSYATTTTVTAPPGGTATVII, and VTTTEYWSQSYATTTTVTAPPGGTATVIIREP. N-linked (GlcNAc...) asparagine glycosylation occurs at Asn-1154. ALS repeat units lie at residues 1157–1188, 1193–1224, 1229–1260, 1265–1296, 1301–1332, and 1337–1368; these read VTTTEYWSQSYATTTTVTGPPGGTDTVIIREP, VTTTEYWSQSFATTTTVTAPPGGTDSVIIREP, VTTTEYWSQSYATTTTVTAPPGGTDSVIIREP, and VTTTEYWSQSYATTTTVTAPPGGTATVIIREP. N-linked (GlcNAc...) asparagine glycosylation is present at Asn-1370. The ALS 29 repeat unit spans residues 1373 to 1404; it reads VTTTEYWSQSYATTTTVTAPPGGTATVIIREP. N-linked (GlcNAc...) asparagine glycosylation occurs at Asn-1406. Residues 1409–1440 form an ALS 30 repeat; that stretch reads VTTTEYWSQSYATTTTITAPPGDTDTVIIREP. Asn-1442 carries N-linked (GlcNAc...) asparagine glycosylation. ALS repeat units follow at residues 1445-1476 and 1481-1512; these read VTTTEYWSQSFATTTTVTAPPGGTDSVIIREP and VTTTEYWSQSYATTTTVTAPPGGTATVIIREP. An N-linked (GlcNAc...) asparagine glycan is attached at Asn-1514. The stretch at 1517-1548 is one ALS 33 repeat; it reads VTTTEYWSQSYATTTTVTAPPGGTATVIIREP. The N-linked (GlcNAc...) asparagine glycan is linked to Asn-1550. One copy of the ALS 34 repeat lies at 1553–1584; the sequence is VTTTEYWSQSYATTTTITAPPGDTDTVIIREP. Residue Asn-1586 is glycosylated (N-linked (GlcNAc...) asparagine). The ALS 35 repeat unit spans residues 1589–1620; that stretch reads VTTTEYWSQSYATTTTVTAPPGGTDTVIIREP. N-linked (GlcNAc...) asparagine glycosylation is present at Asn-1622. The ALS 36 repeat unit spans residues 1625–1656; sequence VTTTEYWSQSYATTTTVTAPPGGTATVIIREP. Asn-1658 carries N-linked (GlcNAc...) asparagine glycosylation. ALS repeat units follow at residues 1661 to 1692 and 1697 to 1728; these read VTTTEYWSQSYATTTTVTGPPGSTDTVIIREP and VTTTEYWSQSYATTTTVTAPPGGTATVIIREP. Asn-1730 carries N-linked (GlcNAc...) asparagine glycosylation. Residues 1733 to 1764 form an ALS 39 repeat; that stretch reads VTTTEYWSQSYATTTTVTAPPGGTDTVIIREP. Asn-1766 is a glycosylation site (N-linked (GlcNAc...) asparagine). ALS repeat units follow at residues 1769–1800 and 1805–1836; these read VTTTEYWSQSYATTTTVTAPPGGTDTVIIREP and VTTTEYWSQSYATTTTVTAPPGGTATVIIREP. Asn-1838 carries an N-linked (GlcNAc...) asparagine glycan. 2 ALS repeats span residues 1841–1872 and 1877–1907; these read VTTTEYWSESYATTTTVTGPPGGTDVILIREP and VTTTEYWSESYATTTTITAPPGATDSVRIRE. An N-linked (GlcNAc...) asparagine glycan is attached at Asn-1910. ALS repeat units follow at residues 1913 to 1944 and 1949 to 1980; these read VTTTEYWSQSYATTTTVTAPPGGTDSVIIREP and VTTTEYWSQSYATTTTVTAPPGGTATVIIREP. N-linked (GlcNAc...) asparagine glycosylation is present at Asn-1982. ALS repeat units follow at residues 1985-2016, 2021-2052, and 2057-2088; these read VTTTEYWSQSYATTTTVTAPPGGTDTVIIREP and VTTTEYWSQSYATTTTVTAPPGGTATVIIREP. Asn-2090 is a glycosylation site (N-linked (GlcNAc...) asparagine). ALS repeat units follow at residues 2093 to 2124 and 2129 to 2157; these read VTTTEYWSQSYATTTTVTGPPGGTDTVIIREP and VTTTEYWSQSYATTLTITAPPGGTNSVII. Asn-2197 carries an N-linked (GlcNAc...) asparagine glycan. Disordered regions lie at residues 2200 to 2235 and 2274 to 2494; these read VTHLPSSSSKPVDIPSSDVVTSTNDNSLTSLTGSEN and TTII…QQTT. A compositionally biased stretch (low complexity) spans 2204 to 2233; the sequence is PSSSSKPVDIPSSDVVTSTNDNSLTSLTGS. N-linked (GlcNAc...) asparagine glycosylation occurs at Asn-2281. A compositionally biased stretch (low complexity) spans 2282-2296; that stretch reads GSGKSKSGELSSTGS. Composition is skewed to polar residues over residues 2329 to 2420 and 2429 to 2452; these read STET…SATA and NGATTKGQDTAGGNSNGSTATTNI. Residues Asn-2444 and Asn-2466 are each glycosylated (N-linked (GlcNAc...) asparagine). Composition is skewed to low complexity over residues 2453–2471 and 2482–2494; these read QGGNNEPGNQPGTNTTGEP and SISQPTTLSQQTT. Residue Asp-2507 is the site of GPI-anchor amidated aspartate attachment. Positions 2508–2530 are cleaved as a propeptide — removed in mature form; the sequence is GSGSIVQHSGWLYVLLTAISIFF.

It belongs to the ALS family. Post-translationally, N-glycosylated and O-glycosylated. In terms of processing, the GPI-anchor is attached to the protein in the endoplasmic reticulum and serves to target the protein to the cell surface. There, the glucosamine-inositol phospholipid moiety is cleaved off and the GPI-modified mannoprotein is covalently attached via its lipidless GPI glycan remnant to the 1,6-beta-glucan of the outer cell wall layer.

It is found in the cell membrane. It localises to the secreted. The protein resides in the cell wall. Functionally, cell surface adhesion protein which mediates both yeast-to-host tissue adherence and yeast aggregation. Plays an important role in the pathogenesis of C.albicans infections. In Candida albicans (strain SC5314 / ATCC MYA-2876) (Yeast), this protein is Agglutinin-like protein 2 (ALS2).